The following is a 252-amino-acid chain: 3-deoxy-manno-octulosonate cytidylyltransferase (252 aa).

The protein belongs to the KdsB family.

The protein localises to the cytoplasm. It carries out the reaction 3-deoxy-alpha-D-manno-oct-2-ulosonate + CTP = CMP-3-deoxy-beta-D-manno-octulosonate + diphosphate. The protein operates within nucleotide-sugar biosynthesis; CMP-3-deoxy-D-manno-octulosonate biosynthesis; CMP-3-deoxy-D-manno-octulosonate from 3-deoxy-D-manno-octulosonate and CTP: step 1/1. It functions in the pathway bacterial outer membrane biogenesis; lipopolysaccharide biosynthesis. Activates KDO (a required 8-carbon sugar) for incorporation into bacterial lipopolysaccharide in Gram-negative bacteria. This chain is 3-deoxy-manno-octulosonate cytidylyltransferase, found in Xylella fastidiosa (strain Temecula1 / ATCC 700964).